The following is a 303-amino-acid chain: MSQIDKMAKIKKLREISDAPFVDCKKALENSDYDIDLAINWLNKSGKSKALKKSDRIAAEGLVLAKKDPNSVLVFELNSETDFVAKNQNFINLQQKIGELLLANDFTNLEDALLIQDEAGRPISELLILATATIGEKITLRRVFKTKYSLEQSVEVYTHSNGQIAVITILKGGNLEIAKNISMHVAALNPQYILKIEVPNEKLQEIQLEVEKKAFAEVKNFEKKPENVKAGILKGMIDKQLSEFVLELQPLATDSAITVEKYLAQNSATLEKVVRFEVGEGIQKQNVDFSAEVNQQIQEFQKK.

Residues 81-84 are involved in Mg(2+) ion dislocation from EF-Tu; it reads TDFV.

The protein belongs to the EF-Ts family.

It localises to the cytoplasm. Its function is as follows. Associates with the EF-Tu.GDP complex and induces the exchange of GDP to GTP. It remains bound to the aminoacyl-tRNA.EF-Tu.GTP complex up to the GTP hydrolysis stage on the ribosome. The protein is Elongation factor Ts of Mesomycoplasma hyopneumoniae (strain J / ATCC 25934 / NCTC 10110) (Mycoplasma hyopneumoniae).